An 882-amino-acid polypeptide reads, in one-letter code: Isoamylase 2, chloroplastic (882 aa).

The transit peptide at 1–70 (MAAWSPSVGI…LQSYQFSKIC (70 aa)) directs the protein to the chloroplast.

The protein belongs to the glycosyl hydrolase 13 family. Associates with ISA1 to form the heteromultimeric complex Iso1 required for amylopectin synthesis.

The protein resides in the plastid. It localises to the chloroplast. The protein operates within glycan biosynthesis; starch biosynthesis. Its function is as follows. Involved in the trimming of pre-amylopectin chains. Accelerates the crystallization of nascent amylopectin molecules during starch synthesis. ISA1 and ISA2 work exclusively together as a multimeric holoenzyme. ISA1-ISA2 removes preferentially branches that are very close to other branches. In Arabidopsis thaliana (Mouse-ear cress), this protein is Isoamylase 2, chloroplastic (ISA2).